The primary structure comprises 157 residues: Small ribosomal subunit protein uS7 (157 aa).

Belongs to the universal ribosomal protein uS7 family. In terms of assembly, part of the 30S ribosomal subunit. Contacts proteins S9 and S11.

One of the primary rRNA binding proteins, it binds directly to 16S rRNA where it nucleates assembly of the head domain of the 30S subunit. Is located at the subunit interface close to the decoding center, probably blocks exit of the E-site tRNA. This Chlamydia trachomatis serovar A (strain ATCC VR-571B / DSM 19440 / HAR-13) protein is Small ribosomal subunit protein uS7.